The following is a 177-amino-acid chain: B9 domain-containing protein 2 (177 aa).

Residues 2 to 118 (AEVHIIGQIL…EIGTWKVAPN (117 aa)) form the C2 B9-type domain.

This sequence belongs to the B9D family. As to quaternary structure, probable component of the tectonic-like complex (also named MKS complex), composed of B9d1, B9d2, Cc2d2a, Mks1 and tctn. As to expression, expressed in chordotonal neurons in the antennae (at protein level). Expressed in spermatids (at protein level).

The protein localises to the cytoplasm. Its subcellular location is the cytoskeleton. The protein resides in the cilium basal body. Probable component of the tectonic-like complex (also named MKS complex), a complex localized at the transition zone of primary cilia. Has a role in ciliary structure and function. The sequence is that of B9 domain-containing protein 2 from Drosophila melanogaster (Fruit fly).